The following is a 765-amino-acid chain: Kinesin-like protein KIN-14S (765 aa).

A Kinesin motor domain is found at 132 to 456 (NIRVFCRCRP…LNFASRVRGI (325 aa)). 215 to 222 (GQTGTGKT) lines the ATP pocket. The stretch at 469–534 (ELLKSKQMAE…ERKTRIKQES (66 aa)) forms a coiled coil. Disordered stretches follow at residues 581-613 (MPQQQPSQGHSKRFSDTTFKENNNSNRRSSSMD) and 654-678 (LRPEPSSLSSMETPSRPPPSFRGDP). The span at 602 to 611 (NNNSNRRSSS) shows a compositional bias: low complexity.

Belongs to the TRAFAC class myosin-kinesin ATPase superfamily. Kinesin family. KIN-14 subfamily.

The polypeptide is Kinesin-like protein KIN-14S (Arabidopsis thaliana (Mouse-ear cress)).